A 498-amino-acid chain; its full sequence is ATP synthase subunit beta, chloroplastic (498 aa).

An ATP-binding site is contributed by 172-179 (GGAGVGKT).

It belongs to the ATPase alpha/beta chains family. In terms of assembly, F-type ATPases have 2 components, CF(1) - the catalytic core - and CF(0) - the membrane proton channel. CF(1) has five subunits: alpha(3), beta(3), gamma(1), delta(1), epsilon(1). CF(0) has four main subunits: a(1), b(1), b'(1) and c(9-12).

It localises to the plastid. It is found in the chloroplast thylakoid membrane. It catalyses the reaction ATP + H2O + 4 H(+)(in) = ADP + phosphate + 5 H(+)(out). In terms of biological role, produces ATP from ADP in the presence of a proton gradient across the membrane. The catalytic sites are hosted primarily by the beta subunits. The chain is ATP synthase subunit beta, chloroplastic from Brasenia schreberi (Water shield).